The following is a 410-amino-acid chain: Beta-arrestin-2 (410 aa).

A Phosphotyrosine modification is found at Y48. Hydroxyproline; by PHD2 occurs at positions 176 and 181. Positions 241 to 410 are interaction with TRAF6; the sequence is ADICLFSTAQ…KDDDCDDQFC (170 aa). S361 is subject to Phosphoserine. The tract at residues 364–410 is interaction with AP2B1; the sequence is RETDVPVDTNLIEFDTNYATDDDIVFEDFARLRLKGMKDDDCDDQFC. Position 383 is a phosphothreonine (T383). The short motif at 386–396 is the [DE]-X(1,2)-F-X-X-[FL]-X-X-X-R motif element; the sequence is DIVFEDFARLR.

The protein belongs to the arrestin family. As to quaternary structure, homooligomer; the self-association is mediated by InsP6-binding. Heterooligomer with ARRB1; the association is mediated by InsP6-binding. Interacts with ADRB2 and CHRM2. Interacts with PDE4A. Interacts with PDE4D. Interacts with MAPK10, MAPK1 and MAPK3. Interacts with DRD2. Interacts with FSHR. Interacts with CLTC. Interacts with HTR2C. Interacts with CCR5. Interacts with CXCR4. Interacts with SRC. Interacts with DUSP16; the interaction is interrupted by stimulation of AGTR1 and activation of MAPK10. Interacts with CHUK; the interaction is enhanced stimulation of ADRB2. Interacts with RELA. Interacts with MDM2; the interaction is enhanced by activation of GPCRs. Interacts with SLC9A5. Interacts with TRAF6. Interacts with IGF1R. Interacts with ENG. Interacts with ARRB2. Interacts with KIR2DL1, KIR2DL3 and KIR2DL4. Interacts with LDLR. Interacts with AP2B1. Interacts with C5AR1. Interacts with RAF1. Interacts with MAP2K1. Interacts with MAPK1. Interacts with MAPK10; the interaction enhances MAPK10 activation by MAP3K5. Interacts with MAP2K4; the interaction is enhanced by presence of MAP3K5 and MAPK10. Interacts with MAP3K5. Interacts with AKT1. Interacts with IKBKB and MAP3K14. Interacts with SMO (activated). Interacts with GSK3A and GSK3B. Interacts with CXCR4; the interaction is dependent on C-terminal phosphorylation of CXCR4 and allows activation of MAPK1 and MAPK3. Interacts with GPR143. Interacts with HCK and CXCR1 (phosphorylated). Associates with protein phosphatase 2A (PP2A). Interacts with ACKR3 and ACKR4. Interacts with ARRDC1; the interaction is direct. Interacts with GPR61, GPR62 and GPR135. Interacts (via NACHT and LRR domains) with NLRP3; this interaction is direct and inducible by omega-3 polyunsaturated fatty acids (PUFAs). Interacts with FFAR4 (via C-terminus); this interaction is stimulated by long-chain fatty acids (LCFAs). Interacts with GPR35. Interacts with GPR84. Interacts with TIGIT; this interaction inhibits the NF-kappa-B pathway. Interacts with TGFBR3. In terms of processing, phosphorylated at Thr-383 in the cytoplasm; probably dephosphorylated at the plasma membrane. The phosphorylation does not regulate internalization and recycling of ADRB2, interaction with clathrin or AP2B1. Post-translationally, the ubiquitination status appears to regulate the formation and trafficking of beta-arrestin-GPCR complexes and signaling. Ubiquitination appears to occur GPCR-specific. Ubiquitinated by MDM2; the ubiquitination is required for rapid internalization of ADRB2. Deubiquitinated by USP33; the deubiquitination leads to a dissociation of the beta-arrestin-GPCR complex. Stimulation of a class A GPCR, such as ADRB2, induces transient ubiquitination and subsequently promotes association with USP33. Stimulation of a class B GPCR promotes a sustained ubiquitination. Deubiquitinated by USP20; allowing USP20 to deubiquitinate TRAF6 leading to inhibition of NF-kappa-B signaling. Hydroxylation by PHD2 modulates the rate of internalization by slowing down recruitment to the plasma membrane and inhibiting subsequent co-internalization with class A receptors. As to expression, predominantly localized in neuronal tissues and in the spleen.

It is found in the cytoplasm. The protein localises to the nucleus. The protein resides in the cell membrane. It localises to the membrane. Its subcellular location is the clathrin-coated pit. It is found in the cytoplasmic vesicle. Functions in regulating agonist-mediated G-protein coupled receptor (GPCR) signaling by mediating both receptor desensitization and resensitization processes. During homologous desensitization, beta-arrestins bind to the GPRK-phosphorylated receptor and sterically preclude its coupling to the cognate G-protein; the binding appears to require additional receptor determinants exposed only in the active receptor conformation. The beta-arrestins target many receptors for internalization by acting as endocytic adapters (CLASPs, clathrin-associated sorting proteins) and recruiting the GPRCs to the adapter protein 2 complex 2 (AP-2) in clathrin-coated pits (CCPs). However, the extent of beta-arrestin involvement appears to vary significantly depending on the receptor, agonist and cell type. Internalized arrestin-receptor complexes traffic to intracellular endosomes, where they remain uncoupled from G-proteins. Two different modes of arrestin-mediated internalization occur. Class A receptors, like ADRB2, OPRM1, ENDRA, D1AR and ADRA1B dissociate from beta-arrestin at or near the plasma membrane and undergo rapid recycling. Class B receptors, like AVPR2, AGTR1, NTSR1, TRHR and TACR1 internalize as a complex with arrestin and traffic with it to endosomal vesicles, presumably as desensitized receptors, for extended periods of time. Receptor resensitization then requires that receptor-bound arrestin is removed so that the receptor can be dephosphorylated and returned to the plasma membrane. Mediates endocytosis of CCR7 following ligation of CCL19 but not CCL21. Involved in internalization of P2RY1, P2RY4, P2RY6 and P2RY11 and ATP-stimulated internalization of P2RY2. Involved in phosphorylation-dependent internalization of OPRD1 and subsequent recycling or degradation. Involved in ubiquitination of IGF1R. Beta-arrestins function as multivalent adapter proteins that can switch the GPCR from a G-protein signaling mode that transmits short-lived signals from the plasma membrane via small molecule second messengers and ion channels to a beta-arrestin signaling mode that transmits a distinct set of signals that are initiated as the receptor internalizes and transits the intracellular compartment. Acts as a signaling scaffold for MAPK pathways such as MAPK1/3 (ERK1/2) and MAPK10 (JNK3). ERK1/2 and JNK3 activated by the beta-arrestin scaffold are largely excluded from the nucleus and confined to cytoplasmic locations such as endocytic vesicles, also called beta-arrestin signalosomes. Acts as a signaling scaffold for the AKT1 pathway. GPCRs for which the beta-arrestin-mediated signaling relies on both ARRB1 and ARRB2 (codependent regulation) include ADRB2, F2RL1 and PTH1R. For some GPCRs the beta-arrestin-mediated signaling relies on either ARRB1 or ARRB2 and is inhibited by the other respective beta-arrestin form (reciprocal regulation). Increases ERK1/2 signaling in AGTR1- and AVPR2-mediated activation (reciprocal regulation). Involved in CCR7-mediated ERK1/2 signaling involving ligand CCL19. Is involved in type-1A angiotensin II receptor/AGTR1-mediated ERK activity. Is involved in type-1A angiotensin II receptor/AGTR1-mediated MAPK10 activity. Is involved in dopamine-stimulated AKT1 activity in the striatum by disrupting the association of AKT1 with its negative regulator PP2A. Involved in AGTR1-mediated chemotaxis. Appears to function as signaling scaffold involved in regulation of MIP-1-beta-stimulated CCR5-dependent chemotaxis. Involved in attenuation of NF-kappa-B-dependent transcription in response to GPCR or cytokine stimulation by interacting with and stabilizing CHUK. Suppresses UV-induced NF-kappa-B-dependent activation by interacting with CHUK. The function is promoted by stimulation of ADRB2 and dephosphorylation of ARRB2. Involved in IL8-mediated granule release in neutrophils. Involved in p53/TP53-mediated apoptosis by regulating MDM2 and reducing the MDM2-mediated degradation of p53/TP53. May serve as nuclear messenger for GPCRs. Upon stimulation of OR1D2, may be involved in regulation of gene expression during the early processes of fertilization. Also involved in regulation of receptors other than GPCRs. Involved in endocytosis of TGFBR2 and TGFBR3 and down-regulates TGF-beta signaling such as NF-kappa-B activation. Involved in endocytosis of low-density lipoprotein receptor/LDLR. Involved in endocytosis of smoothened homolog/Smo, which also requires GRK2. Involved in endocytosis of SLC9A5. Involved in endocytosis of ENG and subsequent TGF-beta-mediated ERK activation and migration of epithelial cells. Involved in Toll-like receptor and IL-1 receptor signaling through the interaction with TRAF6 which prevents TRAF6 autoubiquitination and oligomerization required for activation of NF-kappa-B and JUN. Involved in insulin resistance by acting as insulin-induced signaling scaffold for SRC, AKT1 and INSR. Involved in regulation of inhibitory signaling of natural killer cells by recruiting PTPN6 and PTPN11 to KIR2DL1. Involved in the internalization of the atypical chemokine receptor ACKR3. Acts as an adapter protein coupling FFAR4 receptor to specific downstream signaling pathways, as well as mediating receptor endocytosis. During the activation step of NLRP3 inflammasome, directly associates with NLRP3 leading to inhibition of pro-inflammatory cytokine release and inhibition of inflammation. This Mus musculus (Mouse) protein is Beta-arrestin-2 (Arrb2).